The primary structure comprises 287 residues: Ribosomal RNA small subunit methyltransferase I (287 aa).

Belongs to the methyltransferase superfamily. RsmI family.

It is found in the cytoplasm. The enzyme catalyses cytidine(1402) in 16S rRNA + S-adenosyl-L-methionine = 2'-O-methylcytidine(1402) in 16S rRNA + S-adenosyl-L-homocysteine + H(+). Functionally, catalyzes the 2'-O-methylation of the ribose of cytidine 1402 (C1402) in 16S rRNA. In Streptococcus pyogenes serotype M6 (strain ATCC BAA-946 / MGAS10394), this protein is Ribosomal RNA small subunit methyltransferase I.